The following is a 411-amino-acid chain: L-cysteine:1D-myo-inositol 2-amino-2-deoxy-alpha-D-glucopyranoside ligase (411 aa).

Zn(2+) is bound at residue Cys-43. Residues 43–46 (CGIT), Thr-58, and 81–83 (NVT) each bind L-cysteinyl-5'-AMP. The 'HIGH' region signature appears at 45-55 (ITPYDATHLGH). The 'ERGGDP' region motif lies at 186–191 (QRGGDP). Residue Trp-226 participates in L-cysteinyl-5'-AMP binding. Cys-230 provides a ligand contact to Zn(2+). L-cysteinyl-5'-AMP is bound at residue 248–250 (GSD). His-255 contributes to the Zn(2+) binding site. Ile-282 contributes to the L-cysteinyl-5'-AMP binding site. The 'KMSKS' region signature appears at 288 to 292 (KMSKS).

Belongs to the class-I aminoacyl-tRNA synthetase family. MshC subfamily. As to quaternary structure, monomer. The cofactor is Zn(2+).

It carries out the reaction 1D-myo-inositol 2-amino-2-deoxy-alpha-D-glucopyranoside + L-cysteine + ATP = 1D-myo-inositol 2-(L-cysteinylamino)-2-deoxy-alpha-D-glucopyranoside + AMP + diphosphate + H(+). Catalyzes the ATP-dependent condensation of GlcN-Ins and L-cysteine to form L-Cys-GlcN-Ins. In Mycobacterium marinum (strain ATCC BAA-535 / M), this protein is L-cysteine:1D-myo-inositol 2-amino-2-deoxy-alpha-D-glucopyranoside ligase.